Consider the following 462-residue polypeptide: MAVATHCFTSPCHDRIRFFSSDDGIGRLGITRKRINGTFLLKILPPIQSADLRTTGGRSSRPLSAFRSGFSKGIFDIVPLPSKNELKELTAPLLLKLVGVLACAFLIVPSADAVDALKTCACLLKGCRIELAKCIANPACAANVACLQTCNNRPDETECQIKCGDLFENSVVDEFNECAVSRKKCVPRKSDLGEFPAPDPSVLVQNFNISDFNGKWYITSGLNPTFDAFDCQLHEFHTEGDNKLVGNISWRIKTLDSGFFTRSAVQKFVQDPNQPGVLYNHDNEYLHYQDDWYILSSKIENKPEDYIFVYYRGRNDAWDGYGGAVVYTRSSVLPNSIIPELEKAAKSIGRDFSTFIRTDNTCGPEPALVERIEKTVEEGERIIVKEVEEIEEEVEKEVEKVGRTEMTLFQRLAEGFNELKQDEENFVRELSKEEMEFLDEIKMEASEVEKLFGKALPIRKVR.

Residues Cys-231 and Cys-362 are joined by a disulfide bond. Positions 372–437 (IEKTVEEGER…RELSKEEMEF (66 aa)) form a coiled coil. The tract at residues 380-391 (ERIIVKEVEEIE) is involved in the binding to the thylakoid membrane.

It belongs to the calycin superfamily. Lipocalin family. In terms of assembly, interacts in vitro with LTO1.

Its subcellular location is the plastid. The protein resides in the chloroplast thylakoid membrane. The catalysed reaction is all-trans-violaxanthin + 2 L-ascorbate = all-trans-zeaxanthin + 2 L-dehydroascorbate + 2 H2O. Its activity is regulated as follows. Activity limited by low ascorbate availability. Feedback inhibition by zeaxanthin. Requires the presence of micelle-forming lipids such as monogalactosyldiacylglyceride (MGDG). Low concentration of bilayer forming lipids, such as digalactosyldiacylglyceride (DGDG) or phosphatidylcholine, supports a slower but nearly complete activity. 80% of the specific activity in lumenal chloroplast fractions is lost in vitro in the presence of reduced thioredoxin. Functionally, part of the xanthophyll (or violaxanthin) cycle for controlling the concentration of zeaxanthin in chloroplasts. Catalyzes the two-step mono de-epoxidation reaction. Stereospecific for all-trans xanthophylls. Zeaxanthin induces the dissipation of excitation energy in the chlorophyll of the light-harvesting protein complex of photosystem II. The sequence is that of Violaxanthin de-epoxidase, chloroplastic from Arabidopsis thaliana (Mouse-ear cress).